A 1874-amino-acid chain; its full sequence is WD repeat-containing protein 90 (1874 aa).

Residues Met1–Pro59 are disordered. Phosphoserine occurs at positions 16 and 20. The segment at Pro59–Phe267 is binds with microtubules. A Phosphoserine modification is found at Ser301. 10 WD repeats span residues Gly469–Arg512, Pro514–Glu556, Val563–Cys603, Ser677–Glu716, Glu718–Leu757, Ser760–Asp799, Arg844–Leu883, Asn944–Glu984, Val988–Cys1026, and Gly1031–Gly1068. Over residues Arg1066–Pro1075 the composition is skewed to basic and acidic residues. Disordered regions lie at residues Arg1066–Glu1132 and Ala1160–Pro1211. 11 WD repeats span residues Gly1280–Leu1325, His1328–Ser1369, Arg1371–Gln1412, Leu1422–Ala1460, Glu1462–Arg1500, Gly1559–Gln1598, Val1601–Lys1646, Pro1649–Val1688, Ala1695–Glu1740, Pro1800–Leu1839, and Gly1841–Pro1874.

This sequence belongs to the WD repeat WDR90/POC16 family.

Its subcellular location is the cytoplasm. The protein resides in the cytoskeleton. It is found in the microtubule organizing center. The protein localises to the centrosome. It localises to the centriole. Its subcellular location is the centriolar satellite. In terms of biological role, microtubule-binding protein that plays a crucial role in ensuring inner core protein localization within the centriole core, as well as in maintaining the microtubule wall integrity and the overall centriole roundness and stability. Required for efficient primary cilium formation. This Mus musculus (Mouse) protein is WD repeat-containing protein 90 (Wdr90).